The sequence spans 506 residues: Cytochrome P450 71B8 (506 aa).

The chain crosses the membrane as a helical span at residues 5 to 25 (ILLCFFFLFPLLLTLFKKLLP). Position 443 (Cys443) interacts with heme.

Belongs to the cytochrome P450 family. Heme serves as cofactor.

Its subcellular location is the membrane. This is Cytochrome P450 71B8 (CYP71B8) from Arabidopsis thaliana (Mouse-ear cress).